We begin with the raw amino-acid sequence, 420 residues long: Pyridinium-3,5-bisthiocarboxylic acid mononucleotide nickel insertion protein (420 aa).

Positions 81 to 104 are disordered; the sequence is NHEHKHNHHEIKNDEPAHSHEHHH. Residues 90–99 show a composition bias toward basic and acidic residues; it reads EIKNDEPAHS.

It belongs to the LarC family.

It carries out the reaction Ni(II)-pyridinium-3,5-bisthiocarboxylate mononucleotide = pyridinium-3,5-bisthiocarboxylate mononucleotide + Ni(2+). Involved in the biosynthesis of a nickel-pincer cofactor ((SCS)Ni(II) pincer complex). Binds Ni(2+), and functions in nickel delivery to pyridinium-3,5-bisthiocarboxylic acid mononucleotide (P2TMN), to form the mature cofactor. Is thus probably required for the activation of nickel-pincer cofactor-dependent enzymes. In Clostridium acetobutylicum (strain ATCC 824 / DSM 792 / JCM 1419 / IAM 19013 / LMG 5710 / NBRC 13948 / NRRL B-527 / VKM B-1787 / 2291 / W), this protein is Pyridinium-3,5-bisthiocarboxylic acid mononucleotide nickel insertion protein.